We begin with the raw amino-acid sequence, 605 residues long: LysM domain receptor-like kinase 10 (605 aa).

Residues 1–20 (MFSLPALLIGACAFAAAAVA) form the signal peptide. The Extracellular portion of the chain corresponds to 21 to 245 (ASGDGCRAGC…GMGNSLSGGA (225 aa)). 3 disulfide bridges follow: Cys26/Cys89, Cys30/Cys161, and Cys87/Cys159. Residue Asn44 is glycosylated (N-linked (GlcNAc...) asparagine). Chitin is bound by residues 115–121 (GGDTYDA) and 142–148 (PPGRIPG). Residues Asn154 and Asn158 are each glycosylated (N-linked (GlcNAc...) asparagine). Positions 174-221 (LTYPLWDGETLESVAAQYGFSSPAEMELIRRYNPGMGGVSGKGIVFIP) constitute a LysM domain. Asn226 carries N-linked (GlcNAc...) asparagine glycosylation. The chain crosses the membrane as a helical span at residues 246–266 (IAGIVIACIAIFIVAIWLIIM). Topologically, residues 267–605 (FYRWQKFRKA…DLRDMDYHPF (339 aa)) are cytoplasmic. Residue Ser278 is modified to Phosphoserine. Residues 317–591 (FSMEHKIGQG…RSVVVALMAL (275 aa)) form the Protein kinase domain. ATP is bound by residues 323–331 (IGQGGFGSV) and Lys344. The active-site Proton acceptor is Asp436.

The protein belongs to the protein kinase superfamily. Ser/Thr protein kinase family.

It is found in the cell membrane. It catalyses the reaction L-seryl-[protein] + ATP = O-phospho-L-seryl-[protein] + ADP + H(+). The enzyme catalyses L-threonyl-[protein] + ATP = O-phospho-L-threonyl-[protein] + ADP + H(+). The chain is LysM domain receptor-like kinase 10 from Oryza sativa subsp. japonica (Rice).